Consider the following 130-residue polypeptide: Ribosome-binding factor A (130 aa).

Belongs to the RbfA family. Monomer. Binds 30S ribosomal subunits, but not 50S ribosomal subunits or 70S ribosomes.

It localises to the cytoplasm. In terms of biological role, one of several proteins that assist in the late maturation steps of the functional core of the 30S ribosomal subunit. Associates with free 30S ribosomal subunits (but not with 30S subunits that are part of 70S ribosomes or polysomes). Required for efficient processing of 16S rRNA. May interact with the 5'-terminal helix region of 16S rRNA. The polypeptide is Ribosome-binding factor A (Lachnospira eligens (strain ATCC 27750 / DSM 3376 / VPI C15-48 / C15-B4) (Eubacterium eligens)).